A 447-amino-acid chain; its full sequence is Phosphoglucosamine mutase (447 aa).

S101 serves as the catalytic Phosphoserine intermediate. S101, D242, D244, and D246 together coordinate Mg(2+). A Phosphoserine modification is found at S101.

The protein belongs to the phosphohexose mutase family. It depends on Mg(2+) as a cofactor. Activated by phosphorylation.

It catalyses the reaction alpha-D-glucosamine 1-phosphate = D-glucosamine 6-phosphate. Its function is as follows. Catalyzes the conversion of glucosamine-6-phosphate to glucosamine-1-phosphate. This is Phosphoglucosamine mutase from Methylobacterium radiotolerans (strain ATCC 27329 / DSM 1819 / JCM 2831 / NBRC 15690 / NCIMB 10815 / 0-1).